Here is a 119-residue protein sequence, read N- to C-terminus: C-C motif chemokine 24 (119 aa).

Residues 1 to 26 (MAGLATFVVSLLLVTLCAHCIDPAGS) form the signal peptide. Intrachain disulfides connect cysteine 33-cysteine 58 and cysteine 34-cysteine 74. N-linked (GlcNAc...) asparagine glycans are attached at residues asparagine 54 and asparagine 115.

This sequence belongs to the intercrine beta (chemokine CC) family.

The protein localises to the secreted. Its function is as follows. Chemotactic for resting T-lymphocytes, and eosinophils. Has lower chemotactic activity for neutrophils but none for monocytes and activated lymphocytes. Is a strong suppressor of colony formation by a multipotential hematopoietic progenitor cell line. Binds to CCR3. The polypeptide is C-C motif chemokine 24 (Canis lupus familiaris (Dog)).